The following is a 207-amino-acid chain: MRADENNTLDLNNLPDDPSRDIFPFFEEGFSSSSSSGGFREKQTKDGKEYECRFCSLKFFKSQALGGHMNRHRQERETESLNKARELVLRNDSFPPHQGPPSFSYHQGDVHIGDLTQFKPMMYPPRHFSLPGSSSILQLQPPYLYPPLSSPFPQHNTNIGNNGTRHQTLTNSVCGGRALPDSSYTFIGAPVANGSRVAPHLPPHHGL.

A compositionally biased stretch (low complexity) spans 1–16 (MRADENNTLDLNNLPD). The segment at 1-20 (MRADENNTLDLNNLPDDPSR) is disordered. The C2H2-type zinc finger occupies 50 to 72 (YECRFCSLKFFKSQALGGHMNRH).

In terms of tissue distribution, expressed in the emerging leaf, stamen and carpel primordia. Not expressed in the apical shoot meristem (SAM).

The protein resides in the nucleus. Functionally, acts with JAG to promote growth and patterning in stamens and carpels. Promotes the growth of the abaxial and adaxial sides of floral organs. Promotes the growth of the pollen-bearing microsporangia in anthers, the carpel walls of the gynoecium and the establishment of the correct number of cell layers in carpel walls. Promotes leaf blade growth and trichome development. This chain is Zinc finger protein JAGGED-like (JGL), found in Arabidopsis thaliana (Mouse-ear cress).